A 145-amino-acid polypeptide reads, in one-letter code: Secreted RxLR effector protein PSE1 (145 aa).

Positions 1–21 (MRLSSFIVVGAAVVNLLTSGS) are cleaved as a signal peptide. Positions 53-73 (RLLRYHSNNNRGGDEDIAEER) match the RxLR-dEER motif.

The protein belongs to the RxLR effector family.

It is found in the secreted. The protein resides in the host cell. Its function is as follows. Secreted effector that impairs both plant effector-triggered immunity and pathogen-associated molecular patterns (PAMP)-triggered immunity (PTI). Suppresses plant cell death as a part of the plant defense responses. Facilitates plant infection by altering the auxin content at the roots penetration points of the of the pathogen. This Phytophthora nicotianae (Potato buckeye rot agent) protein is Secreted RxLR effector protein PSE1.